The sequence spans 434 residues: Trigger factor (434 aa).

The 86-residue stretch at 161–246 (EDRVTVDFTG…LKKVEQRELP (86 aa)) folds into the PPIase FKBP-type domain.

This sequence belongs to the FKBP-type PPIase family. Tig subfamily.

It localises to the cytoplasm. The enzyme catalyses [protein]-peptidylproline (omega=180) = [protein]-peptidylproline (omega=0). Its function is as follows. Involved in protein export. Acts as a chaperone by maintaining the newly synthesized protein in an open conformation. Functions as a peptidyl-prolyl cis-trans isomerase. In Sodalis glossinidius (strain morsitans), this protein is Trigger factor.